The primary structure comprises 231 residues: MIAGGELAALPPQAPQPAGTPALVVRRLGCVDYEPTWHAMRAFTDARSADTPDEIWLLEHPPVYTLGQAGQPEHLLRDVGIPLVKIDRGGQITYHGPGQLVAYLLIDLHRRGLKVRELVTLMEQAVIDCLAGYGVGAERKAGAPGVYVDGAKIGALGLRVRNGRSYHGLALNVDVDLAPFSSINPCGYEGLRTVRMKDFGIADDVASVGEHLLTALQRLLPPVYPAGRPPA.

The region spanning 49–224 is the BPL/LPL catalytic domain; it reads ADTPDEIWLL…ALQRLLPPVY (176 aa). Substrate-binding positions include 88–95, 155–157, and 168–170; these read RGGQITYH, ALG, and GLA. The active-site Acyl-thioester intermediate is C186.

The protein belongs to the LipB family.

The protein resides in the cytoplasm. It carries out the reaction octanoyl-[ACP] + L-lysyl-[protein] = N(6)-octanoyl-L-lysyl-[protein] + holo-[ACP] + H(+). It participates in protein modification; protein lipoylation via endogenous pathway; protein N(6)-(lipoyl)lysine from octanoyl-[acyl-carrier-protein]: step 1/2. Functionally, catalyzes the transfer of endogenously produced octanoic acid from octanoyl-acyl-carrier-protein onto the lipoyl domains of lipoate-dependent enzymes. Lipoyl-ACP can also act as a substrate although octanoyl-ACP is likely to be the physiological substrate. The protein is Octanoyltransferase of Aromatoleum aromaticum (strain DSM 19018 / LMG 30748 / EbN1) (Azoarcus sp. (strain EbN1)).